The sequence spans 397 residues: Dual-specificity RNA methyltransferase RlmN (397 aa).

The active-site Proton acceptor is glutamate 130. Residues 138–377 form the Radical SAM core domain; that stretch reads VEDRGAVCIS…ASPIRTPRGR (240 aa). An intrachain disulfide couples cysteine 145 to cysteine 383. Residues cysteine 152, cysteine 156, and cysteine 159 each contribute to the [4Fe-4S] cluster site. Residues 209–210, serine 241, 263–265, and asparagine 340 each bind S-adenosyl-L-methionine; these read GE and SLH. The active-site S-methylcysteine intermediate is the cysteine 383.

It belongs to the radical SAM superfamily. RlmN family. [4Fe-4S] cluster serves as cofactor.

The protein resides in the cytoplasm. It carries out the reaction adenosine(2503) in 23S rRNA + 2 reduced [2Fe-2S]-[ferredoxin] + 2 S-adenosyl-L-methionine = 2-methyladenosine(2503) in 23S rRNA + 5'-deoxyadenosine + L-methionine + 2 oxidized [2Fe-2S]-[ferredoxin] + S-adenosyl-L-homocysteine. It catalyses the reaction adenosine(37) in tRNA + 2 reduced [2Fe-2S]-[ferredoxin] + 2 S-adenosyl-L-methionine = 2-methyladenosine(37) in tRNA + 5'-deoxyadenosine + L-methionine + 2 oxidized [2Fe-2S]-[ferredoxin] + S-adenosyl-L-homocysteine. In terms of biological role, specifically methylates position 2 of adenine 2503 in 23S rRNA and position 2 of adenine 37 in tRNAs. m2A2503 modification seems to play a crucial role in the proofreading step occurring at the peptidyl transferase center and thus would serve to optimize ribosomal fidelity. The chain is Dual-specificity RNA methyltransferase RlmN from Granulibacter bethesdensis (strain ATCC BAA-1260 / CGDNIH1).